A 343-amino-acid polypeptide reads, in one-letter code: Heat-inducible transcription repressor HrcA (343 aa).

It belongs to the HrcA family.

Negative regulator of class I heat shock genes (grpE-dnaK-dnaJ and groELS operons). Prevents heat-shock induction of these operons. The sequence is that of Heat-inducible transcription repressor HrcA from Bacillus velezensis (strain DSM 23117 / BGSC 10A6 / LMG 26770 / FZB42) (Bacillus amyloliquefaciens subsp. plantarum).